We begin with the raw amino-acid sequence, 131 residues long: D-ribose pyranase (131 aa).

The active-site Proton donor is His-20. Substrate contacts are provided by residues Asp-28, His-98, and 120–122 (YAN).

Belongs to the RbsD / FucU family. RbsD subfamily. Homodecamer.

It localises to the cytoplasm. It catalyses the reaction beta-D-ribopyranose = beta-D-ribofuranose. The protein operates within carbohydrate metabolism; D-ribose degradation; D-ribose 5-phosphate from beta-D-ribopyranose: step 1/2. In terms of biological role, catalyzes the interconversion of beta-pyran and beta-furan forms of D-ribose. In Bacillus cereus (strain B4264), this protein is D-ribose pyranase.